The primary structure comprises 706 residues: Polyribonucleotide nucleotidyltransferase (706 aa).

2 residues coordinate Mg(2+): D487 and D493. In terms of domain architecture, KH spans P553–I612. The S1 motif domain occupies G622–K692.

This sequence belongs to the polyribonucleotide nucleotidyltransferase family. The cofactor is Mg(2+).

The protein resides in the cytoplasm. It carries out the reaction RNA(n+1) + phosphate = RNA(n) + a ribonucleoside 5'-diphosphate. Involved in mRNA degradation. Catalyzes the phosphorolysis of single-stranded polyribonucleotides processively in the 3'- to 5'-direction. The sequence is that of Polyribonucleotide nucleotidyltransferase from Neisseria gonorrhoeae (strain ATCC 700825 / FA 1090).